Consider the following 262-residue polypeptide: NAD-dependent glucose-6-phosphate dehydrogenase (262 aa).

Residues Asn-90, Ser-115, Tyr-152, and Lys-156 each coordinate NAD(+). Tyr-152 serves as the catalytic Proton acceptor.

Belongs to the NAD(P)-dependent epimerase/dehydratase family. As to quaternary structure, homodimer.

It carries out the reaction D-glucose 6-phosphate + NAD(+) = 6-phospho-D-glucono-1,5-lactone + NADH + H(+). The protein operates within carbohydrate degradation; pentose phosphate pathway. In terms of biological role, catalyzes the NAD-dependent oxidation of glucose 6-phosphate to 6-phosphogluconolactone. This chain is NAD-dependent glucose-6-phosphate dehydrogenase, found in Haloferax volcanii (strain ATCC 29605 / DSM 3757 / JCM 8879 / NBRC 14742 / NCIMB 2012 / VKM B-1768 / DS2) (Halobacterium volcanii).